The primary structure comprises 304 residues: Coenzyme PQQ synthesis protein B (304 aa).

This sequence belongs to the PqqB family.

It functions in the pathway cofactor biosynthesis; pyrroloquinoline quinone biosynthesis. In terms of biological role, may be involved in the transport of PQQ or its precursor to the periplasm. This is Coenzyme PQQ synthesis protein B from Ectopseudomonas mendocina (strain ymp) (Pseudomonas mendocina).